Consider the following 88-residue polypeptide: Putative membrane protein insertion efficiency factor (88 aa).

The segment at 67–88 is disordered; it reads LNAGGYDPVPPKSDNHSKENKK. The segment covering 79–88 has biased composition (basic and acidic residues); it reads SDNHSKENKK.

The protein belongs to the UPF0161 family.

It is found in the cell inner membrane. Could be involved in insertion of integral membrane proteins into the membrane. The chain is Putative membrane protein insertion efficiency factor from Actinobacillus succinogenes (strain ATCC 55618 / DSM 22257 / CCUG 43843 / 130Z).